The following is a 289-amino-acid chain: Enoyl-CoA hydratase domain-containing protein 3, mitochondrial (289 aa).

The transit peptide at 1–14 (MLLRGFSELLKCRG) directs the protein to the mitochondrion.

The protein belongs to the enoyl-CoA hydratase/isomerase family.

Its subcellular location is the mitochondrion. In terms of biological role, may play a role in fatty acid biosynthesis and insulin sensitivity. The polypeptide is Enoyl-CoA hydratase domain-containing protein 3, mitochondrial (echdc3) (Danio rerio (Zebrafish)).